Reading from the N-terminus, the 342-residue chain is Phosphate acyltransferase (342 aa).

It belongs to the PlsX family. As to quaternary structure, homodimer. Probably interacts with PlsY.

Its subcellular location is the cytoplasm. The enzyme catalyses a fatty acyl-[ACP] + phosphate = an acyl phosphate + holo-[ACP]. It functions in the pathway lipid metabolism; phospholipid metabolism. Catalyzes the reversible formation of acyl-phosphate (acyl-PO(4)) from acyl-[acyl-carrier-protein] (acyl-ACP). This enzyme utilizes acyl-ACP as fatty acyl donor, but not acyl-CoA. The polypeptide is Phosphate acyltransferase (Shewanella putrefaciens (strain CN-32 / ATCC BAA-453)).